The primary structure comprises 858 residues: RNA-directed RNA polymerase 2a (858 aa).

Positions 511 to 624 constitute a RdRp catalytic domain; the sequence is KYCLEIDLSK…FSVLPPVGDP (114 aa). A disordered region spans residues 775-830; that stretch reads RKKKDGIERRRNDKRRTPTSPHGGGEETETKVSQEESTGTMLQKSQRESAFKSQTI. The segment covering 798–808 has biased composition (basic and acidic residues); sequence GGEETETKVSQ. Over residues 809-818 the composition is skewed to polar residues; that stretch reads EESTGTMLQK.

This sequence belongs to the ssRNA positive-strand viruses RNA-directed RNA polymerase family. As to quaternary structure, interacts with replication protein 1a.

The catalysed reaction is RNA(n) + a ribonucleoside 5'-triphosphate = RNA(n+1) + diphosphate. RNA-dependent RNA polymerase which replicates the viral genome composed of 3 RNA segments, RNA1, RNA2 and RNA3. This chain is RNA-directed RNA polymerase 2a, found in Cucumber mosaic virus (strain Ixora) (CMV).